A 199-amino-acid polypeptide reads, in one-letter code: Holliday junction branch migration complex subunit RuvA (199 aa).

A domain I region spans residues Met1–Ala62. The interval Lys63 to Leu141 is domain II. A flexible linker region spans residues Gln142–Asp152. A domain III region spans residues Asp152–Arg199.

The protein belongs to the RuvA family. In terms of assembly, homotetramer. Forms an RuvA(8)-RuvB(12)-Holliday junction (HJ) complex. HJ DNA is sandwiched between 2 RuvA tetramers; dsDNA enters through RuvA and exits via RuvB. An RuvB hexamer assembles on each DNA strand where it exits the tetramer. Each RuvB hexamer is contacted by two RuvA subunits (via domain III) on 2 adjacent RuvB subunits; this complex drives branch migration. In the full resolvosome a probable DNA-RuvA(4)-RuvB(12)-RuvC(2) complex forms which resolves the HJ.

Its subcellular location is the cytoplasm. The RuvA-RuvB-RuvC complex processes Holliday junction (HJ) DNA during genetic recombination and DNA repair, while the RuvA-RuvB complex plays an important role in the rescue of blocked DNA replication forks via replication fork reversal (RFR). RuvA specifically binds to HJ cruciform DNA, conferring on it an open structure. The RuvB hexamer acts as an ATP-dependent pump, pulling dsDNA into and through the RuvAB complex. HJ branch migration allows RuvC to scan DNA until it finds its consensus sequence, where it cleaves and resolves the cruciform DNA. This chain is Holliday junction branch migration complex subunit RuvA, found in Desulforamulus reducens (strain ATCC BAA-1160 / DSM 100696 / MI-1) (Desulfotomaculum reducens).